Consider the following 477-residue polypeptide: UDP-N-acetylmuramate--L-alanine ligase (477 aa).

Residue 122-128 coordinates ATP; the sequence is GTHGKTT.

This sequence belongs to the MurCDEF family.

It is found in the cytoplasm. It catalyses the reaction UDP-N-acetyl-alpha-D-muramate + L-alanine + ATP = UDP-N-acetyl-alpha-D-muramoyl-L-alanine + ADP + phosphate + H(+). Its pathway is cell wall biogenesis; peptidoglycan biosynthesis. Cell wall formation. In Xanthomonas oryzae pv. oryzae (strain MAFF 311018), this protein is UDP-N-acetylmuramate--L-alanine ligase.